Here is a 156-residue protein sequence, read N- to C-terminus: Small ribosomal subunit protein uS7 (156 aa).

It belongs to the universal ribosomal protein uS7 family. In terms of assembly, part of the 30S ribosomal subunit. Contacts proteins S9 and S11.

Its function is as follows. One of the primary rRNA binding proteins, it binds directly to 16S rRNA where it nucleates assembly of the head domain of the 30S subunit. Is located at the subunit interface close to the decoding center, probably blocks exit of the E-site tRNA. The polypeptide is Small ribosomal subunit protein uS7 (Pectobacterium atrosepticum (strain SCRI 1043 / ATCC BAA-672) (Erwinia carotovora subsp. atroseptica)).